An 88-amino-acid polypeptide reads, in one-letter code: Putative membrane protein insertion efficiency factor (88 aa).

It belongs to the UPF0161 family.

Its subcellular location is the cell inner membrane. In terms of biological role, could be involved in insertion of integral membrane proteins into the membrane. The polypeptide is Putative membrane protein insertion efficiency factor (Rickettsia canadensis (strain McKiel)).